A 387-amino-acid chain; its full sequence is Patatin group J-1 (387 aa).

An N-terminal signal peptide occupies residues 1 to 23 (MATTKSFLILIVMILATTSSTFA). The region spanning 32 to 230 (LSIDGGGIKG…TVGDPALLSL (199 aa)) is the PNPLA domain. The GXGXXG signature appears at 36-41 (GGGIKG). Positions 75–79 (GTSTG) match the GXSXG motif. Serine 77 (nucleophile) is an active-site residue. An N-linked (GlcNAc...) asparagine glycan is attached at asparagine 115. The Proton acceptor role is filled by aspartate 216. A DGA/G motif is present at residues 216-218 (DGG). Residues 322-385 (ENALTGTTTE…NRKKLRANKA (64 aa)) are a coiled coil.

This sequence belongs to the patatin family. Tuber.

The protein localises to the vacuole. Its function is as follows. Probable lipolytic acyl hydrolase (LAH), an activity which is thought to be involved in the response of tubers to pathogens. The protein is Patatin group J-1 of Solanum tuberosum (Potato).